The chain runs to 270 residues: Cbp/p300-interacting transactivator 2 (270 aa).

The interval 138–201 is disordered; the sequence is LHPAAGHQMN…SGGGSGSGNM (64 aa). Residues 165-198 show a composition bias toward gly residues; that stretch reads STPGGSGGSSTPGGSGSSSGGGAGSSNSGGGSGS.

It belongs to the CITED family. Interacts (via C-terminus) with SMAD2. Interacts (via C-terminus) with SMAD3 (via MH2 domain). Interacts with LHX2 (via LIM domains). Interacts with WT1. Interacts (via C-terminus) with EP300 (via CH1 domain); the interaction is stimulated in response to hypoxia. Interacts with PPARA. Interacts (via C-terminus) with TFAP2A, TFAP2B and TFAP2C.

It localises to the nucleus. Transcriptional coactivator of the p300/CBP-mediated transcription complex. Acts as a bridge, linking TFAP2 transcription factors and the p300/CBP transcriptional coactivator complex in order to stimulate TFAP2-mediated transcriptional activation. Positively regulates TGF-beta signaling through its association with the SMAD/p300/CBP-mediated transcriptional coactivator complex. Stimulates the peroxisome proliferator-activated receptors PPARA transcriptional activity. Enhances estrogen-dependent transactivation mediated by estrogen receptors. Also acts as a transcriptional corepressor; interferes with the binding of the transcription factors HIF1A or STAT2 and the p300/CBP transcriptional coactivator complex. Participates in sex determination and early gonad development by stimulating transcription activation of SRY. Plays a role in controlling left-right patterning during embryogenesis; potentiates transcriptional activation of NODAL-mediated gene transcription in the left lateral plate mesoderm (LPM). Plays an essential role in differentiation of the adrenal cortex from the adrenogonadal primordium (AGP); stimulates WT1-mediated transcription activation thereby up-regulating the nuclear hormone receptor NR5A1 promoter activity. Associates with chromatin to the PITX2 P1 promoter region. This Homo sapiens (Human) protein is Cbp/p300-interacting transactivator 2 (CITED2).